Reading from the N-terminus, the 494-residue chain is Glycerol kinase 1 (494 aa).

T12 provides a ligand contact to ADP. ATP is bound by residues T12, T13, and S14. T12 contacts sn-glycerol 3-phosphate. Residue R16 coordinates ADP. R82, E83, Y134, and D243 together coordinate sn-glycerol 3-phosphate. Residues R82, E83, Y134, D243, and Q244 each coordinate glycerol. Residues T265 and G308 each coordinate ADP. The ATP site is built by T265, G308, Q312, and G408. ADP contacts are provided by G408 and N412.

The protein belongs to the FGGY kinase family.

It catalyses the reaction glycerol + ATP = sn-glycerol 3-phosphate + ADP + H(+). Its pathway is polyol metabolism; glycerol degradation via glycerol kinase pathway; sn-glycerol 3-phosphate from glycerol: step 1/1. Its activity is regulated as follows. Inhibited by fructose 1,6-bisphosphate (FBP). Functionally, key enzyme in the regulation of glycerol uptake and metabolism. Catalyzes the phosphorylation of glycerol to yield sn-glycerol 3-phosphate. This is Glycerol kinase 1 from Pseudomonas aeruginosa (strain ATCC 15692 / DSM 22644 / CIP 104116 / JCM 14847 / LMG 12228 / 1C / PRS 101 / PAO1).